The chain runs to 196 residues: GTP cyclohydrolase-2 (196 aa).

49 to 53 (RVHSE) provides a ligand contact to GTP. The Zn(2+) site is built by Cys54, Cys65, and Cys67. GTP is bound by residues Gln70, 92–94 (EGR), and Thr114. Asp126 serves as the catalytic Proton acceptor. Catalysis depends on Arg128, which acts as the Nucleophile. GTP contacts are provided by Thr149 and Lys154.

Belongs to the GTP cyclohydrolase II family. As to quaternary structure, homodimer. Zn(2+) serves as cofactor.

The enzyme catalyses GTP + 4 H2O = 2,5-diamino-6-hydroxy-4-(5-phosphoribosylamino)-pyrimidine + formate + 2 phosphate + 3 H(+). Its pathway is cofactor biosynthesis; riboflavin biosynthesis; 5-amino-6-(D-ribitylamino)uracil from GTP: step 1/4. Functionally, catalyzes the conversion of GTP to 2,5-diamino-6-ribosylamino-4(3H)-pyrimidinone 5'-phosphate (DARP), formate and pyrophosphate. The sequence is that of GTP cyclohydrolase-2 from Salmonella choleraesuis (strain SC-B67).